The chain runs to 340 residues: Protein-glutamate methylesterase/protein-glutamine glutaminase 1 (340 aa).

A Response regulatory domain is found at 5 to 122 (KLFIVDDSAL…KVVSELKEKI (118 aa)). A 4-aspartylphosphate modification is found at aspartate 56. The region spanning 148–340 (GKNGRQLVVI…AIAEEIAANI (193 aa)) is the CheB-type methylesterase domain. Residues serine 160, histidine 187, and aspartate 285 contribute to the active site.

This sequence belongs to the CheB family. Phosphorylated by CheA. Phosphorylation of the N-terminal regulatory domain activates the methylesterase activity.

It is found in the cytoplasm. The enzyme catalyses [protein]-L-glutamate 5-O-methyl ester + H2O = L-glutamyl-[protein] + methanol + H(+). The catalysed reaction is L-glutaminyl-[protein] + H2O = L-glutamyl-[protein] + NH4(+). Involved in chemotaxis. Part of a chemotaxis signal transduction system that modulates chemotaxis in response to various stimuli. Catalyzes the demethylation of specific methylglutamate residues introduced into the chemoreceptors (methyl-accepting chemotaxis proteins or MCP) by CheR. Also mediates the irreversible deamidation of specific glutamine residues to glutamic acid. In Carboxydothermus hydrogenoformans (strain ATCC BAA-161 / DSM 6008 / Z-2901), this protein is Protein-glutamate methylesterase/protein-glutamine glutaminase 1.